Reading from the N-terminus, the 492-residue chain is N-succinylglutamate 5-semialdehyde dehydrogenase (492 aa).

Residue 225–230 participates in NAD(+) binding; that stretch reads GSSNTG. Catalysis depends on residues Glu-248 and Cys-282.

Belongs to the aldehyde dehydrogenase family. AstD subfamily.

The catalysed reaction is N-succinyl-L-glutamate 5-semialdehyde + NAD(+) + H2O = N-succinyl-L-glutamate + NADH + 2 H(+). The protein operates within amino-acid degradation; L-arginine degradation via AST pathway; L-glutamate and succinate from L-arginine: step 4/5. Functionally, catalyzes the NAD-dependent reduction of succinylglutamate semialdehyde into succinylglutamate. The polypeptide is N-succinylglutamate 5-semialdehyde dehydrogenase (Colwellia psychrerythraea (strain 34H / ATCC BAA-681) (Vibrio psychroerythus)).